Here is a 253-residue protein sequence, read N- to C-terminus: MICOS complex subunit mic25-b (253 aa).

Gly2 is lipidated: N-myristoyl glycine. The tract at residues 38–82 is disordered; that stretch reads KDQSTWAASGAASGSATVPSKVGSSASHPAAASKDGAHKPTAAGV. Residues 44-53 show a composition bias toward low complexity; that stretch reads AASGAASGSA. A coiled-coil region spans residues 87 to 116; the sequence is AEEDLYRRYEREQTLIQEELARLAKREKDA. Positions 206 to 248 constitute a CHCH domain; it reads DPVCMDLQSNILKCYAENKQERLNCSDLAKEYQKCVSAAQKNL. 2 short sequence motifs (cx9C motif) span residues 209 to 219 and 230 to 240; these read CMDLQSNILKC and CSDLAKEYQKC. 2 disulfides stabilise this stretch: Cys209–Cys240 and Cys219–Cys230.

It belongs to the MICOS complex subunit Mic19 family. Metazoan Mic25 subfamily. In terms of assembly, component of the mitochondrial contact site and cristae organizing system (MICOS) complex (also known as MINOS or MitOS complex).

The protein localises to the mitochondrion inner membrane. Component of the MICOS complex, a large protein complex of the mitochondrial inner membrane that plays crucial roles in the maintenance of crista junctions, inner membrane architecture, and formation of contact sites to the outer membrane. This chain is MICOS complex subunit mic25-b (chchd6-b), found in Xenopus laevis (African clawed frog).